The chain runs to 529 residues: tRNA pseudouridine synthase Pus10 (529 aa).

Zn(2+) is bound by residues Cys-21 and Cys-24. Positions 42 to 89 form a coiled coil; sequence KELLNELQKFLETEKDELILEVMNPPPKKIRLQELEDSIDNLSQNGEG. Phosphoserine occurs at positions 79 and 84. The Zn(2+) site is built by Cys-109 and Cys-112. The interval 304–317 is RNA binding forefinger loop; sequence TPWIIDGERKLESS. The active-site Nucleophile is the Asp-344. The segment at 442–457 is RNA binding thumb loop; it reads QKTPLRVLHRRPLAVR.

The protein belongs to the pseudouridine synthase Pus10 family. In terms of assembly, interacts with components of the microprocessor complex DROSHA and DGCR8. In terms of processing, proteolytically cleaved during TRAIL-induced cell death. Cleaved, in vitro, either by caspase-3 (CASP3) or caspase-8 (CASP8).

It is found in the nucleus. The protein localises to the cytoplasm. The protein resides in the mitochondrion. It carries out the reaction uridine(55) in tRNA = pseudouridine(55) in tRNA. The enzyme catalyses uridine(54) in tRNA = pseudouridine(54) in tRNA. Protein with different functions depending on its subcellular location: involved in miRNA processing in the nucleus and acts as a tRNA pseudouridylate synthase in the cytoplasm. In the cytoplasm, acts as a pseudouridylate synthase by catalyzing synthesis of pseudouridine(54) and pseudouridine(55) from uracil-54 and uracil-55, respectively, in the psi GC loop of a subset of tRNAs. tRNA pseudouridylate synthase activity is enhanced by the presence of 1-methyladenosine at position 53-61 of tRNAs. Does not show tRNA pseudouridylate synthase activity in the nucleus. In the nucleus, promotes primary microRNAs (pri-miRNAs) processing independently of its RNA pseudouridylate synthase activity. Binds pri-miRNAs. Modulator of TRAIL/TNFSF10-induced cell death via activation of procaspase-8 and BID cleavage. Required for the progression of the apoptotic signal through intrinsic mitochondrial cell death. This is tRNA pseudouridine synthase Pus10 from Homo sapiens (Human).